Consider the following 435-residue polypeptide: Protein SUPPRESSOR OF K(+) TRANSPORT GROWTH DEFECT 1 (435 aa).

The 66-residue stretch at 7–72 (EQAIEYVKQA…LRRAEEIRAV (66 aa)) folds into the MIT domain. The disordered stretch occupies residues 73–113 (LDEGGSGPGSNGDAAVATRPKTKPKDGEGGGKDGEDPEQSK). A compositionally biased stretch (basic and acidic residues) spans 95-113 (KPKDGEGGGKDGEDPEQSK). 172–179 (GPPGTGKS) is an ATP binding site.

This sequence belongs to the AAA ATPase family. In terms of assembly, monomer or homodimer (in nucleotide-free form). Decamer, dodecamer or tetradecamer of two stacked respective homooligomeric rings (when bound to ATP); the dodecameric form seems to be predominant. Interacts with members of the ESCRT-III subcomplex such as LIP5, VPS60-1, VPS2.1, VPS20.1, VPS20.2, VPS24-1, VPS32.1, VPS32.2, CHMP1A and VPS24. Binds to PROS/At4g24370. As to expression, mostly expressed in leaves, to a lower extent in seeds, and barely in roots and flowers (at protein level). Particularly expressed in trichomes.

Its subcellular location is the cytoplasm. It is found in the nucleus. The protein resides in the endosome. The protein localises to the multivesicular body membrane. It localises to the prevacuolar compartment membrane. It carries out the reaction ATP + H2O = ADP + phosphate + H(+). Activated by LIP5 and PROS. Functionally, involved in the transport of biosynthetic membrane proteins from the prevacuolar/endosomal compartment to the vacuole. Required for multivesicular body (MVB) protein sorting. Catalyzes the ATP-dependent dissociation of class E VPS proteins from endosomal membranes, such as the disassembly of the ESCRT-III complex. May also regulate cell cycle. Required during seed development for the formation of mucilage in seed coat and testa. Involved in the maintenance of Na(+)/K(+) homeostasis under salt stress. Required for cell expansion. This Arabidopsis thaliana (Mouse-ear cress) protein is Protein SUPPRESSOR OF K(+) TRANSPORT GROWTH DEFECT 1.